Here is a 112-residue protein sequence, read N- to C-terminus: Nitrogen regulatory protein P-II (112 aa).

Y51 bears the O-UMP-tyrosine mark.

The protein belongs to the P(II) protein family. As to quaternary structure, homotrimer.

In nitrogen-limiting conditions, when the ratio of Gln to 2-ketoglutarate decreases, P-II is uridylylated to P-II-UMP. P-II-UMP allows the deadenylation of glutamine synthetase (GS), thus activating the enzyme. Conversely, in nitrogen excess P-II is deuridylated and promotes the adenylation of GS. P-II indirectly controls the transcription of the GS gene (glnA). P-II prevents NR-II-catalyzed conversion of NR-I to NR-I-phosphate, the transcriptional activator of glnA. When P-II is uridylylated to P-II-UMP, these events are reversed. This is Nitrogen regulatory protein P-II (glnB) from Rhizobium etli (strain ATCC 51251 / DSM 11541 / JCM 21823 / NBRC 15573 / CFN 42).